Here is an 877-residue protein sequence, read N- to C-terminus: Dolichyl-phosphate-mannose--protein mannosyltransferase 1 (877 aa).

Asparagine 83 carries an N-linked (GlcNAc...) asparagine glycan. A run of 2 helical transmembrane segments spans residues 109-129 and 150-170; these read FFMD…GAIG and YIFM…LCYL. Asparagine 195 carries an N-linked (GlcNAc...) asparagine glycan. The next 4 helical transmembrane spans lie at 196 to 216, 226 to 246, 252 to 272, and 291 to 311; these read VTIS…AAAI, IPFT…LGLA, VGLF…WFLI, and IILL…HFQL. Positions 340–394 constitute an MIR 1 domain; that stretch reads TEQVGLGSVVTIRHVDTQGGYLHSHEHFYQTGSKQQQITLYPHLDSNNKWLIEPY. N-linked (GlcNAc...) asparagine glycosylation is found at asparagine 395 and asparagine 400. 2 consecutive MIR domains span residues 403-462 and 472-528; these read FVPL…VEIV and QTFV…IETN. The next 4 membrane-spanning stretches (helical) occupy residues 604-624, 643-663, 666-686, and 700-720; these read TWWA…VTVF, VQTF…FIMG, LFLH…GHFF, and FQQV…VFYV. The N-linked (GlcNAc...) asparagine glycan is linked to asparagine 721. Positions 778–877 are disordered; that stretch reads VVEAKQTPKA…EDESVHQVQQ (100 aa). Basic and acidic residues-rich tracts occupy residues 783–799, 807–816, and 847–857; these read QTPK…DHIE, VEEKEVKEEV, and NDEKSVEEKQQ.

The protein belongs to the glycosyltransferase 39 family. In terms of assembly, PMT1 and PMT2 form a functional heterodimer.

It is found in the endoplasmic reticulum membrane. The catalysed reaction is a di-trans,poly-cis-dolichyl beta-D-mannosyl phosphate + L-seryl-[protein] = 3-O-(alpha-D-mannosyl)-L-seryl-[protein] + a di-trans,poly-cis-dolichyl phosphate + H(+). The enzyme catalyses a di-trans,poly-cis-dolichyl beta-D-mannosyl phosphate + L-threonyl-[protein] = 3-O-(alpha-D-mannosyl)-L-threonyl-[protein] + a di-trans,poly-cis-dolichyl phosphate + H(+). It functions in the pathway protein modification; protein glycosylation. Its function is as follows. Protein mannosyltransferase (PMT) involved in hyphal growth and drug sensitivity. Transfers mannose from Dol-P-mannose to Ser or Thr residues on proteins. PMT1, PMT2 and PMT4 account for most of the protein-O-glycosylation activity, while PMT5 and PMT6 may specifically modulate a much narrower spectrum of target proteins. Accounts for the O-glycosylation of the cell wall proteins KRE9, PIR2, RHD3, and ALS1, as well as the SEC20 t-SNARE component. O-glycosylation of SEC20 is essential for its stability. Required for filamentation and early phases of biofilm formation. In Candida albicans (strain SC5314 / ATCC MYA-2876) (Yeast), this protein is Dolichyl-phosphate-mannose--protein mannosyltransferase 1 (PMT1).